We begin with the raw amino-acid sequence, 972 residues long: MRYDVQELLLHQSAEDPFARFANGMAYHPFLQLTQRPTDFSVSSLLTAGSNNNNSGNTNSGNNNSNSNNNTNSNTNNTNNLVAVSPTGGGAQLSPQSNHSSSNTTTTSNTNNSSSNNNNNNSTHNNNNNHTNNNNNNNNNTSQKQGHHLSTTEEPPSPAGTPPPTIVGLPPIPPPNNNSSSSSSNNSASAAAHPSHHPTAAHHSPSTGAAAPPAGPTGLPPPTPPHHLQQQQQQQQHPAPPPPPYFPAAALAALAGSPAGPHPGLYPGGGLRFPPHHPGAHPHAHHLGSAYTTAEDVVLASAVAHQLHPAMRPLRALQPEDDGVVDDPKVTLEGKDLWEKFHKLGTEMVITKSGRQMFPQMKFRVSGLDAKAKYILLLDIVAADDYRYKFHNSRWMVAGKADPEMPKRMYIHPDSPTTGEQWMQKVVSFHKLKLTNNISDKHGFVSTTILNSMHKYQPRFHLVRANDILKLPYSTFRTYVFKETEFIAVTAYQNEKITQLKIDNNPFAKGFRDTGAGKREKKQALMSNRGSDSDKLNPTHVSSSRAPLHLGHAGRPPHLHPHAALLDNQQDDDDKLLDVVGPPQSPLLPLSHSLQQMHAHQHSAALAAWFNHLAGAGAGASEHAAAAAANASAEDALRRRLQADADVERDGSDSSCSESVGGSTGGAFRPTSTGSPKEAVGAAAAAAAAGLNPGGGSYPSPNISVGPPIHPSPHLLPYLYPHGLYPPPHLGLLHNPAAAAAMSPAGLNPGLLFNAQLALAAQHPALFGHAYAAAGHTPVSPLQGLKSHRFSPYSLPGSLGSAFDAVTPGSNANRSGDPPGGGGGGLGGGVVENGPRSLSSSPRPRPASHSPPTRPISMSPTTPPSLMKQPRGGGAGAGVAQSQHSPSELKSMEKMVNGLEVQHNGSAAAAAAALQLAEEAAQHHHHTQAHHQQQQHQSHHQQQHHQQPAQPHPHHQTHLHSHHGATTGGTDQ.

Disordered stretches follow at residues 44–248, 263–286, 508–563, 645–676, 805–889, and 918–972; these read SLLT…YFPA, PGLYPGGGLRFPPHHPGAHPHAHH, AKGF…HPHA, ADVERDGSDSSCSESVGGSTGGAFRPTSTGSP, AVTP…PSEL, and EEAA…GTDQ. 2 stretches are compositionally biased toward low complexity: residues 49 to 80 and 97 to 142; these read GSNNNNSGNTNSGNNNSNSNNNTNSNTNNTNN and SNHS…NNTS. Over residues 155 to 176 the composition is skewed to pro residues; it reads PPSPAGTPPPTIVGLPPIPPPN. Low complexity-rich tracts occupy residues 177–193 and 201–212; these read NNSSSSSSNNSASAAAH and AHHSPSTGAAAP. Over residues 213–225 the composition is skewed to pro residues; the sequence is PAGPTGLPPPTPP. Positions 226–237 are enriched in low complexity; it reads HHLQQQQQQQQH. Residues 274–286 are compositionally biased toward basic residues; sequence PPHHPGAHPHAHH. Residues 332 to 513 constitute a DNA-binding region (T-box); that stretch reads LEGKDLWEKF…NNPFAKGFRD (182 aa). Positions 818 to 831 are enriched in gly residues; sequence PPGGGGGGLGGGVV. The span at 835 to 851 shows a compositional bias: low complexity; that stretch reads PRSLSSSPRPRPASHSP. Position 887 is a phosphoserine (Ser887). Residues 952 to 963 are compositionally biased toward basic residues; sequence HPHHQTHLHSHH.

In terms of tissue distribution, in third-instar larvae, expressed in the brain region that will develop into optic lobes and more weakly in the thoracic part of the ventral ganglion.

The protein resides in the nucleus. Its function is as follows. Essential protein that may function as a transcription regulator. Vital for pupal development. Required for proper development of the optic lobes and wings, and abdominal pigmentation. The sequence is that of Optomotor-blind protein (bi) from Drosophila melanogaster (Fruit fly).